The sequence spans 460 residues: Baeyer-Villiger oxidase AgnL3 (460 aa).

The protein belongs to the questin oxidase family. Requires NADPH as cofactor.

Its pathway is secondary metabolite biosynthesis. Its function is as follows. Baeyer-Villiger oxidase; part of the gene cluster that mediates the biosynthesis of agnestins, dihydroxy-xanthone metabolites. The pathway begins with the assembly and cyclization of atrochrysone thioester by the non-reducing polyketide synthase Agnpks1. The atrochrysone carboxyl ACP thioesterase AgnL7 then breaks the thioester bond and releases the atrochrysone carboxylic acid as the first enzyme-free intermediate. The decarboxylase AgnL1 then catalyzes the concerted decarboxylation-elimination required to convert atochrysone carboxylic acid into emodin anthrone, which is further oxidized to emodin by the anthrone oxygenase AgnL2. Emodin then undergoes reduction catalyzed by the oxidoreductase AgnL4 to yield the dihydroquinone tautomer which is the substrate for reduction by the short chain dehydrogenase AgnL6 reduction to produce hydroxyketone, followed by AgnL8 dehydration and likely spontaneous autoxidation to chrysophanol. Baeyer-Villiger oxidation by the oxidase AgnL3 leads to monodictyphenone via cleavage of the C-10/C-10a bond of chrysophanol. Alternative cleavage at the C-4a/C-10 bond of chrysophanol also leads to the formation some cephalone F. Further conversion to agnestins A and B, requires reduction to dihydro-monodictyphenone, oxidation to agnestin C probably via an epoxide, and rearrangement to either agnestin A or agnestin B directly, although agnestin A or agnestin B can also interconvert. Within the cluster, AgnR1 is the only unassigned oxidoreductase present which could be involved in this conversion. However, AgnR1 seems not to be involved in this step, and thus genes involved in the proposed oxidation/reduction may be located elsewhere on the genome. Further agnestin A derivatives are probably formed by spontaneous decarboxylations, dehydrations and methanolysis reactions. The sequence is that of Baeyer-Villiger oxidase AgnL3 from Paecilomyces divaricatus (Penicillium divaricatum).